The following is a 477-amino-acid chain: Mannitol 2-dehydrogenase (477 aa).

19–30 (IVHIGVGNFHRA) is a binding site for NAD(+).

This sequence belongs to the mannitol dehydrogenase family. In terms of assembly, monomer.

It carries out the reaction D-mannitol + NAD(+) = D-fructose + NADH + H(+). The sequence is that of Mannitol 2-dehydrogenase (mtlK) from Cereibacter sphaeroides (Rhodobacter sphaeroides).